Consider the following 214-residue polypeptide: Pyridoxine/pyridoxamine 5'-phosphate oxidase (214 aa).

Substrate contacts are provided by residues 8-11 and K66; that span reads RTNY. FMN is bound by residues 61 to 66, 76 to 77, R82, K83, and Q105; these read RIVLIK and FT. The substrate site is built by Y123, R127, and S131. Residues 140–141 and W184 each bind FMN; that span reads QS. 190–192 provides a ligand contact to substrate; the sequence is RLH. R194 lines the FMN pocket.

It belongs to the pyridoxamine 5'-phosphate oxidase family. As to quaternary structure, homodimer. FMN serves as cofactor.

The enzyme catalyses pyridoxamine 5'-phosphate + O2 + H2O = pyridoxal 5'-phosphate + H2O2 + NH4(+). The catalysed reaction is pyridoxine 5'-phosphate + O2 = pyridoxal 5'-phosphate + H2O2. It participates in cofactor metabolism; pyridoxal 5'-phosphate salvage; pyridoxal 5'-phosphate from pyridoxamine 5'-phosphate: step 1/1. It functions in the pathway cofactor metabolism; pyridoxal 5'-phosphate salvage; pyridoxal 5'-phosphate from pyridoxine 5'-phosphate: step 1/1. In terms of biological role, catalyzes the oxidation of either pyridoxine 5'-phosphate (PNP) or pyridoxamine 5'-phosphate (PMP) into pyridoxal 5'-phosphate (PLP). This Burkholderia thailandensis (strain ATCC 700388 / DSM 13276 / CCUG 48851 / CIP 106301 / E264) protein is Pyridoxine/pyridoxamine 5'-phosphate oxidase.